The primary structure comprises 426 residues: FK506-binding protein 3 (426 aa).

2 disordered regions span residues 37-143 and 171-314; these read SLDP…PKHQ and TGNY…KKKK. Acidic residues-rich tracts occupy residues 65-94, 111-131, and 181-225; these read DYFEDDDDDEEEDDEEDELDDEEEEEEAEE, EDEEEDDEEEDDEDNDEDDVS, and QDEE…SEEE. Composition is skewed to basic and acidic residues over residues 226–257, 264–278, and 287–311; these read GTPKIEEIVEEKEKVKESPKESKKRVAEESTS, KKDEKKSVQFSKELE, and VEKDNKKATPTKDKKETPVKDDGDK. Positions 340 to 426 constitute a PPIase FKBP-type domain; it reads GAKVGIRYIG…TFDIKLVSLK (87 aa).

It belongs to the FKBP-type PPIase family. FKBP3/4 subfamily.

Its subcellular location is the nucleus. The protein localises to the nucleolus. The enzyme catalyses [protein]-peptidylproline (omega=180) = [protein]-peptidylproline (omega=0). Its activity is regulated as follows. Inhibited by both FK506 and rapamycin. PPIases accelerate the folding of proteins. It catalyzes the cis-trans isomerization of proline imidic peptide bonds in oligopeptides. This is FK506-binding protein 3 (FPR3) from Candida albicans (strain SC5314 / ATCC MYA-2876) (Yeast).